The following is a 394-amino-acid chain: MATTGRRLRPPSPNNNRSRTISSSISLPVSLNASLSSSTSSSSSSSPSNSSKRVMITRSQSTTRSSRPIGSSDSKSGENIIPARNSASRSQEINNGRSRESFARYLEQRTRGSPRSNASSRGVKPGASSPSAWALSPGRLSTMKTPLSSSAPTTSMCMTPPESPVSKAKIRSGGGGAVAGVLKYFMAQKKVSPVQEEDYHRFRIFQNRLLQWRFVNARTEATMANLKINVEDQLFWVWLRIYKMRNYVVENLIEIQRLRQDIKVREVLSLQMPLLNEWSKIDAKNSEALSKLTRKLHALSVRLPLVHGATIDMVSIHEEMVIAIEVMDEIEDVIIKFLPRVEIILYELTELIGMFNQELLYFEEMDESLLSIPLFTAKESSLRVHILQKTEEQR.

The segment at 1–171 (MATTGRRLRP…ESPVSKAKIR (171 aa)) is disordered. Residues 14–67 (NNNRSRTISSSISLPVSLNASLSSSTSSSSSSSPSNSSKRVMITRSQSTTRSSR) are compositionally biased toward low complexity. The segment covering 85–96 (NSASRSQEINNG) has biased composition (polar residues). Residues 97-110 (RSRESFARYLEQRT) are compositionally biased toward basic and acidic residues. Composition is skewed to polar residues over residues 111–120 (RGSPRSNASS) and 142–157 (TMKTPLSSSAPTTSMC). The QWRF motif motif lies at 211–214 (QWRF).

The protein belongs to the QWRF family.

The sequence is that of QWRF motif-containing protein 7 (QWRF7) from Arabidopsis thaliana (Mouse-ear cress).